We begin with the raw amino-acid sequence, 587 residues long: Putative adenylate cyclase 3 (587 aa).

In terms of domain architecture, Guanylate cyclase spans 12–127; sequence AILAADAVGY…DGVNVAARIE (116 aa). 5 TPR repeats span residues 343–376, 421–454, 455–488, 490–522, and 524–556; these read LLVR…DPGM, PQGH…DPNS, ANAY…DPQF, LSLH…APRS, and MTRF…NPSF.

The protein belongs to the adenylyl cyclase class-3 family.

It catalyses the reaction ATP = 3',5'-cyclic AMP + diphosphate. This is Putative adenylate cyclase 3 (cya3) from Rhizobium meliloti (strain 1021) (Ensifer meliloti).